We begin with the raw amino-acid sequence, 548 residues long: Palmitoyltransferase pfa3 (548 aa).

Over 1–32 (MMATLATSPPTSPTWPKRRPRAWALRCERYCC) the chain is Cytoplasmic. A helical transmembrane segment spans residues 33–53 (AAATYFPLAFVYSLTTWAVYV). The Extracellular portion of the chain corresponds to 54–70 (EASIGLKPSRSPWIGLP). The chain crosses the membrane as a helical span at residues 71–91 (TSILGVLLYICLNASYTVAVF). Over 92-173 (TDPGSPLTTG…ATCVGLYNYK (82 aa)) the chain is Cytoplasmic. Residues 130-180 (RYCKKCQCPKPDRAHHCSTCKRCVLKMDHHCPWLATCVGLYNYKAFLLFLI) form the DHHC domain. The chain crosses the membrane as a helical span at residues 174–194 (AFLLFLIYTSLFCWVDFAVSA). The Extracellular portion of the chain corresponds to 195–215 (TWIWTEVFNDAPYLETMLPVN). A helical transmembrane segment spans residues 216–236 (VVLLAILGGIIGLVLTGFTAW). Topologically, residues 237–548 (HISLAVRGMT…EDSSEWRDWD (312 aa)) are cytoplasmic. Disordered stretches follow at residues 313–339 (RAEE…DQLT) and 463–548 (NPHQ…RDWD). Positions 508 to 535 (DPLNQQSVPANGAVNQLQKANEASSATT) are enriched in polar residues. Basic and acidic residues predominate over residues 536 to 548 (NRREDSSEWRDWD).

It belongs to the DHHC palmitoyltransferase family. PFA3 subfamily. Post-translationally, autopalmitoylated.

The protein localises to the vacuole membrane. It catalyses the reaction L-cysteinyl-[protein] + hexadecanoyl-CoA = S-hexadecanoyl-L-cysteinyl-[protein] + CoA. Functionally, palmitoyltransferase specific for VAC8. Palmitoylates VAC8 at one or more of its N-terminal cysteine residues, which is required for its proper membrane localization. In Aspergillus fumigatus (strain ATCC MYA-4609 / CBS 101355 / FGSC A1100 / Af293) (Neosartorya fumigata), this protein is Palmitoyltransferase pfa3 (pfa3).